A 205-amino-acid polypeptide reads, in one-letter code: Large ribosomal subunit protein uL4 (205 aa).

Positions 43 to 78 (ARAGTKAQKTRSEVAGGGKKPWRQKGTGNARAGTIR) are disordered.

It belongs to the universal ribosomal protein uL4 family. As to quaternary structure, part of the 50S ribosomal subunit.

In terms of biological role, one of the primary rRNA binding proteins, this protein initially binds near the 5'-end of the 23S rRNA. It is important during the early stages of 50S assembly. It makes multiple contacts with different domains of the 23S rRNA in the assembled 50S subunit and ribosome. Forms part of the polypeptide exit tunnel. The chain is Large ribosomal subunit protein uL4 from Halorhodospira halophila (strain DSM 244 / SL1) (Ectothiorhodospira halophila (strain DSM 244 / SL1)).